The following is a 293-amino-acid chain: Ribonuclease H2 subunit B (293 aa).

The tract at residues 251–278 (KRPQNSDITSSLLKKPNRKQATKKSKYF) is disordered. A compositionally biased stretch (basic residues) spans 265-276 (KPNRKQATKKSK).

This sequence belongs to the RNase H2 subunit B family. Component of the RNase H2 complex.

The protein localises to the nucleus. The protein resides in the cytoplasm. Its function is as follows. Non catalytic subunit of RNase H2, an endonuclease that specifically degrades the RNA of RNA:DNA hybrids. Participates in DNA replication, possibly by mediating the removal of lagging-strand Okazaki fragment RNA primers during DNA replication. Mediates the excision of single ribonucleotides from DNA:RNA duplexes. The polypeptide is Ribonuclease H2 subunit B (rnh202) (Schizosaccharomyces pombe (strain 972 / ATCC 24843) (Fission yeast)).